The sequence spans 488 residues: Glutamyl-tRNA(Gln) amidotransferase subunit A (488 aa).

Catalysis depends on charge relay system residues K80 and S155. The active-site Acyl-ester intermediate is the S179.

It belongs to the amidase family. GatA subfamily. Heterotrimer of A, B and C subunits.

It catalyses the reaction L-glutamyl-tRNA(Gln) + L-glutamine + ATP + H2O = L-glutaminyl-tRNA(Gln) + L-glutamate + ADP + phosphate + H(+). Allows the formation of correctly charged Gln-tRNA(Gln) through the transamidation of misacylated Glu-tRNA(Gln) in organisms which lack glutaminyl-tRNA synthetase. The reaction takes place in the presence of glutamine and ATP through an activated gamma-phospho-Glu-tRNA(Gln). This is Glutamyl-tRNA(Gln) amidotransferase subunit A from Chloroflexus aggregans (strain MD-66 / DSM 9485).